Reading from the N-terminus, the 1092-residue chain is Fibrinogen-binding protein (1092 aa).

The N-terminal stretch at 1–51 is a signal peptide; sequence MINKKNNLLTKKKPIANKSNKYAIRKFTVGTASIVIGATLLFGLGHNEAKA. The span at 50-63 shows a compositional bias: basic and acidic residues; that stretch reads KAEENSVQDVKDSN. A disordered region spans residues 50–236; it reads KAEENSVQDV…GYTNIDEKIS (187 aa). Residues 52–599 are ligand binding A region; the sequence is EENSVQDVKD…GQGQGDLPPE (548 aa). Positions 64–76 are enriched in acidic residues; it reads TDDELSDSNDQSS. Low complexity predominate over residues 84-98; sequence INNNQSINTDDNNQI. Positions 99-119 are enriched in basic and acidic residues; it reads IKKEETNNYDGIEKRSEDRTE. The span at 120–140 shows a compositional bias: polar residues; sequence STTNVDENEATFLQKTPQDNT. Positions 141-151 are enriched in basic and acidic residues; it reads HLTEEEVKESS. The span at 160 to 170 shows a compositional bias: polar residues; sequence IDTAQQPSHTT. Positions 195 to 220 are enriched in basic and acidic residues; the sequence is KIKESNTESGKEENTIEQPNKVKEDS. 4 residues coordinate Ca(2+): glutamate 294, serine 299, valine 302, and glutamate 309. An interaction with human fibrinogen region spans residues 579 to 590; it reads YDNTIAFSTSSG. CNA-B domains are found at residues 600 to 713 and 714 to 824; these read KTYK…YQTP and KYSL…YDDE. The disordered stretch occupies residues 780 to 1068; sequence KPSGMTQTTT…NEDYGSKGTL (289 aa). Residues 791–801 are compositionally biased toward acidic residues; the sequence is SGDDDEQDADG. Residues 802–814 show a composition bias toward basic and acidic residues; sequence EEVHVTITDHDDF. Over residues 820-1039 the composition is skewed to acidic residues; sequence YYDDESDSDS…DSDSDSDNDS (220 aa). Positions 1053-1057 match the LPXTG sorting signal motif; that stretch reads LPDTG. Threonine 1056 carries the pentaglycyl murein peptidoglycan amidated threonine modification. The propeptide at 1057–1092 is removed by sortase; that stretch reads GANEDYGSKGTLLGTLFAGLGALLLGKRRKNRKNKN.

This sequence belongs to the serine-aspartate repeat-containing protein (SDr) family.

The protein resides in the secreted. It is found in the cell wall. Its function is as follows. Promotes bacterial attachment to both soluble and immobilized forms of fibrinogen in a dose-dependent manner. This binding occurs through the beta-chain of human fibrinogen. Could contribute to the initiation of foreign-body infection by allowing bacteria to adhere to biomaterial surfaces that have become coated with host proteins after implantation. Is important in the pathogenesis of central venous catheter (CVC)-associated infection model. This chain is Fibrinogen-binding protein (fbe), found in Staphylococcus epidermidis.